A 418-amino-acid chain; its full sequence is Glutamyl-tRNA reductase (418 aa).

Residues 49–52 (TCNR), S109, 114–116 (EPQ), and Q120 contribute to the substrate site. The Nucleophile role is filled by C50. 189–194 (GAGETI) contributes to the NADP(+) binding site.

The protein belongs to the glutamyl-tRNA reductase family. As to quaternary structure, homodimer.

The enzyme catalyses (S)-4-amino-5-oxopentanoate + tRNA(Glu) + NADP(+) = L-glutamyl-tRNA(Glu) + NADPH + H(+). It participates in porphyrin-containing compound metabolism; protoporphyrin-IX biosynthesis; 5-aminolevulinate from L-glutamyl-tRNA(Glu): step 1/2. Its function is as follows. Catalyzes the NADPH-dependent reduction of glutamyl-tRNA(Glu) to glutamate 1-semialdehyde (GSA). The chain is Glutamyl-tRNA reductase from Klebsiella pneumoniae (strain 342).